A 334-amino-acid chain; its full sequence is tRNA N6-adenosine threonylcarbamoyltransferase (334 aa).

Fe cation-binding residues include His-107 and His-111. Substrate is bound by residues 129-133, Asp-162, Gly-175, and Asn-269; that span reads LVSGG. Asp-297 is a Fe cation binding site.

Belongs to the KAE1 / TsaD family. Fe(2+) serves as cofactor.

It is found in the cytoplasm. The catalysed reaction is L-threonylcarbamoyladenylate + adenosine(37) in tRNA = N(6)-L-threonylcarbamoyladenosine(37) in tRNA + AMP + H(+). Functionally, required for the formation of a threonylcarbamoyl group on adenosine at position 37 (t(6)A37) in tRNAs that read codons beginning with adenine. Is involved in the transfer of the threonylcarbamoyl moiety of threonylcarbamoyl-AMP (TC-AMP) to the N6 group of A37, together with TsaE and TsaB. TsaD likely plays a direct catalytic role in this reaction. This chain is tRNA N6-adenosine threonylcarbamoyltransferase, found in Campylobacter concisus (strain 13826).